Here is a 261-residue protein sequence, read N- to C-terminus: Cytochrome c oxidase subunit 3 (261 aa).

Over 1–15 (MTHQLHQYHLVDPSP) the chain is Mitochondrial matrix. The chain crosses the membrane as a helical span at residues 16-34 (WPLTGAMGSLLLASGLAVW). Topologically, residues 35–40 (FHTNNT) are mitochondrial intermembrane. Residues 41–66 (MLLKFGLLTLLLTMFQWWRDIIREST) form a helical membrane-spanning segment. At 67 to 72 (YQGHHT) the chain is on the mitochondrial matrix side. Residues 73-105 (SGVQKNMRYGMILFITSEVFFFLGFFWALYHVS) form a helical membrane-spanning segment. The Mitochondrial intermembrane portion of the chain corresponds to 106 to 128 (LVPTPELGAEWPPIGITPLNPME). A helical membrane pass occupies residues 129–152 (VPLLNTAVLLSSGATITWSHHTMM). Residues 153 to 155 (KGN) are Mitochondrial matrix-facing. The helical transmembrane segment at 156–183 (KKEATHALMLTIILGAYFTALQLSEYME) threads the bilayer. At 184-190 (TPFTIAD) the chain is on the mitochondrial intermembrane side. The chain crosses the membrane as a helical span at residues 191-223 (SVYGSLFFVATGFHGLHVMIGTSFLMVCALRLA). At 224–232 (KHHFTITHH) the chain is on the mitochondrial matrix side. Residues 233 to 256 (FGYEAAIWYWHFVDIVWLFLYISV) form a helical membrane-spanning segment. At 257-261 (YWWGS) the chain is on the mitochondrial intermembrane side.

Belongs to the cytochrome c oxidase subunit 3 family. In terms of assembly, component of the cytochrome c oxidase (complex IV, CIV), a multisubunit enzyme composed of 14 subunits. The complex is composed of a catalytic core of 3 subunits MT-CO1, MT-CO2 and MT-CO3, encoded in the mitochondrial DNA, and 11 supernumerary subunits COX4I, COX5A, COX5B, COX6A, COX6B, COX6C, COX7A, COX7B, COX7C, COX8 and NDUFA4, which are encoded in the nuclear genome. The complex exists as a monomer or a dimer and forms supercomplexes (SCs) in the inner mitochondrial membrane with NADH-ubiquinone oxidoreductase (complex I, CI) and ubiquinol-cytochrome c oxidoreductase (cytochrome b-c1 complex, complex III, CIII), resulting in different assemblies (supercomplex SCI(1)III(2)IV(1) and megacomplex MCI(2)III(2)IV(2)).

It localises to the mitochondrion inner membrane. The enzyme catalyses 4 Fe(II)-[cytochrome c] + O2 + 8 H(+)(in) = 4 Fe(III)-[cytochrome c] + 2 H2O + 4 H(+)(out). Functionally, component of the cytochrome c oxidase, the last enzyme in the mitochondrial electron transport chain which drives oxidative phosphorylation. The respiratory chain contains 3 multisubunit complexes succinate dehydrogenase (complex II, CII), ubiquinol-cytochrome c oxidoreductase (cytochrome b-c1 complex, complex III, CIII) and cytochrome c oxidase (complex IV, CIV), that cooperate to transfer electrons derived from NADH and succinate to molecular oxygen, creating an electrochemical gradient over the inner membrane that drives transmembrane transport and the ATP synthase. Cytochrome c oxidase is the component of the respiratory chain that catalyzes the reduction of oxygen to water. Electrons originating from reduced cytochrome c in the intermembrane space (IMS) are transferred via the dinuclear copper A center (CU(A)) of subunit 2 and heme A of subunit 1 to the active site in subunit 1, a binuclear center (BNC) formed by heme A3 and copper B (CU(B)). The BNC reduces molecular oxygen to 2 water molecules using 4 electrons from cytochrome c in the IMS and 4 protons from the mitochondrial matrix. The polypeptide is Cytochrome c oxidase subunit 3 (MT-CO3) (Lycodon semicarinatus (Ryukyu odd-tooth snake)).